The following is a 127-amino-acid chain: Thioredoxin-3, mitochondrial (127 aa).

Residues 1-21 constitute a mitochondrion transit peptide; sequence MLFYKPVMRMAVRPLKSIRFQ. The region spanning 22-127 is the Thioredoxin domain; sequence SSYTSITKLT…TALEKGIKDL (106 aa). Active-site nucleophile residues include cysteine 55 and cysteine 58. Residues cysteine 55 and cysteine 58 are joined by a disulfide bond.

Belongs to the thioredoxin family.

It is found in the mitochondrion. The polypeptide is Thioredoxin-3, mitochondrial (TRX3) (Saccharomyces cerevisiae (strain ATCC 204508 / S288c) (Baker's yeast)).